Consider the following 149-residue polypeptide: Large ribosomal subunit protein bL9 (149 aa).

This sequence belongs to the bacterial ribosomal protein bL9 family.

Functionally, binds to the 23S rRNA. The chain is Large ribosomal subunit protein bL9 from Magnetococcus marinus (strain ATCC BAA-1437 / JCM 17883 / MC-1).